The sequence spans 259 residues: Phosphoadenosine 5'-phosphosulfate reductase (259 aa).

The active-site Nucleophile; cysteine thiosulfonate intermediate is Cys-244.

This sequence belongs to the PAPS reductase family. CysH subfamily.

It is found in the cytoplasm. The catalysed reaction is [thioredoxin]-disulfide + sulfite + adenosine 3',5'-bisphosphate + 2 H(+) = [thioredoxin]-dithiol + 3'-phosphoadenylyl sulfate. It functions in the pathway sulfur metabolism; hydrogen sulfide biosynthesis; sulfite from sulfate: step 3/3. Its function is as follows. Catalyzes the formation of sulfite from phosphoadenosine 5'-phosphosulfate (PAPS) using thioredoxin as an electron donor. The polypeptide is Phosphoadenosine 5'-phosphosulfate reductase (Vibrio campbellii (strain ATCC BAA-1116)).